The sequence spans 156 residues: Large ribosomal subunit protein uL15 (156 aa).

Basic residues predominate over residues Met-1–Arg-16. Positions Met-1 to Met-37 are disordered.

It belongs to the universal ribosomal protein uL15 family. Part of the 50S ribosomal subunit.

Functionally, binds to the 23S rRNA. In Pyrobaculum aerophilum (strain ATCC 51768 / DSM 7523 / JCM 9630 / CIP 104966 / NBRC 100827 / IM2), this protein is Large ribosomal subunit protein uL15.